A 335-amino-acid polypeptide reads, in one-letter code: Acetyl-coenzyme A carboxylase carboxyl transferase subunit alpha (335 aa).

Residues 38-292 (TLEQKAEELR…ATALSEEIEN (255 aa)) enclose the CoA carboxyltransferase C-terminal domain.

Belongs to the AccA family. In terms of assembly, acetyl-CoA carboxylase is a heterohexamer composed of biotin carboxyl carrier protein (AccB), biotin carboxylase (AccC) and two subunits each of ACCase subunit alpha (AccA) and ACCase subunit beta (AccD).

It localises to the cytoplasm. It carries out the reaction N(6)-carboxybiotinyl-L-lysyl-[protein] + acetyl-CoA = N(6)-biotinyl-L-lysyl-[protein] + malonyl-CoA. Its pathway is lipid metabolism; malonyl-CoA biosynthesis; malonyl-CoA from acetyl-CoA: step 1/1. In terms of biological role, component of the acetyl coenzyme A carboxylase (ACC) complex. First, biotin carboxylase catalyzes the carboxylation of biotin on its carrier protein (BCCP) and then the CO(2) group is transferred by the carboxyltransferase to acetyl-CoA to form malonyl-CoA. The polypeptide is Acetyl-coenzyme A carboxylase carboxyl transferase subunit alpha (Heliobacterium modesticaldum (strain ATCC 51547 / Ice1)).